A 109-amino-acid polypeptide reads, in one-letter code: Cell division suppressor protein YneA (109 aa).

Positions serine 39–isoleucine 90 constitute a LysM domain.

Belongs to the YneA family.

Its subcellular location is the cytoplasm. Inhibits cell division during the SOS response. Affects a later stage of the cell division protein assembly, after the assembly of the Z ring, by probably suppressing recruitment of FtsL and/or DivIC to the division machinery. This is Cell division suppressor protein YneA from Listeria monocytogenes serotype 4b (strain F2365).